The following is a 602-amino-acid chain: Alpha-(1-&gt;6)-mannopyranosyltransferase B (602 aa).

Helical transmembrane passes span 105 to 125 (IGTM…ALPV), 148 to 168 (MIVL…APLV), 190 to 210 (TFGA…QDIY), 244 to 264 (VPFI…SIAA), 274 to 294 (IVGG…AAGW), 320 to 340 (LILH…FLLV), 368 to 388 (GVLI…LGFV), 404 to 424 (VVAI…TVVV), 448 to 468 (WMSM…NLGL), 472 to 492 (TAAM…AFMV), 503 to 523 (IHAV…FPVV), 546 to 566 (LGVI…GLAL), and 571 to 591 (VFSI…VGWW).

This sequence belongs to the MptA/B family.

Its subcellular location is the membrane. It participates in cell wall biogenesis; cell wall polysaccharide biosynthesis. Its function is as follows. Involved in the initiation of core alpha-(1-&gt;6) mannan biosynthesis of lipomannan (LM-A) and multi-mannosylated polymer (LM-B), extending triacylatedphosphatidyl-myo-inositol dimannoside (Ac1PIM2) and mannosylated glycolipid, 1,2-di-O-C16/C18:1-(alpha-D-mannopyranosyl)-(1-&gt;4)-(alpha-D-glucopyranosyluronic acid)-(1-&gt;3)-glycerol (Man1GlcAGroAc2), respectively. Catalyzes the addition of alpha-(1-&gt;6)-mannose residue. The sequence is that of Alpha-(1-&gt;6)-mannopyranosyltransferase B (mptB) from Corynebacterium glutamicum (strain ATCC 13032 / DSM 20300 / JCM 1318 / BCRC 11384 / CCUG 27702 / LMG 3730 / NBRC 12168 / NCIMB 10025 / NRRL B-2784 / 534).